Consider the following 443-residue polypeptide: Putative metabolite transport protein YaaU (443 aa).

Residues 1-18 are Cytoplasmic-facing; it reads MQPSRNFDDLKFSSIHRR. A helical membrane pass occupies residues 19–39; sequence ILLWGSGGPFLDGYVLVMIGV. The Periplasmic portion of the chain corresponds to 40 to 53; that stretch reads ALEQLTPALKLDAD. The helical transmembrane segment at 54–74 threads the bilayer; that stretch reads WIGLLGAGTLAGLFVGTSLFG. Topologically, residues 75–84 are cytoplasmic; sequence YISDKVGRRK. The chain crosses the membrane as a helical span at residues 85–105; that stretch reads MFLIDIIAIGVISVATMFVSS. Residues 106–113 lie on the Periplasmic side of the membrane; that stretch reads PVELLVMR. The helical transmembrane segment at 114–134 threads the bilayer; sequence VLIGIVIGADYPIATSMITEF. Topologically, residues 135 to 145 are cytoplasmic; the sequence is SSTRQRAFSIS. A helical transmembrane segment spans residues 146–166; it reads FIAAMWYVGATCADLVGYWLY. Residues 167 to 173 are Periplasmic-facing; sequence DVEGGWR. Residues 174–194 form a helical membrane-spanning segment; it reads WMLGSAAIPCLLILIGRFELP. The Cytoplasmic segment spans residues 195 to 241; it reads ESPRWLLRKGRVKECEEMMIKLFGEPVAFDEEQPQQTRFRDLFNRRH. Residues 242-262 form a helical membrane-spanning segment; that stretch reads FPFVLFVAAIWTCQVIPMFAI. Topologically, residues 263–282 are periplasmic; it reads YTFGPQIVGLLGLGVGKNAA. The chain crosses the membrane as a helical span at residues 283 to 303; sequence LGNVVISLFFMLGCIPPMLWL. At 304-309 the chain is on the cytoplasmic side; sequence NTAGRR. Residues 310–329 form a helical membrane-spanning segment; it reads PLLIGSFAMMTLALAVLGLI. The Periplasmic portion of the chain corresponds to 330–334; that stretch reads PDMGI. A helical membrane pass occupies residues 335–357; the sequence is WLVVMAFAVYAFFSGGPGNLQWL. Topologically, residues 358–373 are cytoplasmic; the sequence is YPNELFPTDIRASAVG. Residues 374–394 form a helical membrane-spanning segment; the sequence is VIMSLSRIGTIVSTWALPIFI. Over 395 to 401 the chain is Periplasmic; it reads NNYGISN. Residues 402 to 422 form a helical membrane-spanning segment; the sequence is TMLMGAGISLFGLLISVAFAP. The Cytoplasmic portion of the chain corresponds to 423–443; that stretch reads ETRGMSLAQTSNMTIRGQRMG.

This sequence belongs to the major facilitator superfamily. Sugar transporter (TC 2.A.1.1) family.

The protein resides in the cell inner membrane. The sequence is that of Putative metabolite transport protein YaaU (yaaU) from Escherichia coli (strain K12).